A 319-amino-acid chain; its full sequence is Ficolin-2 (319 aa).

A signal peptide spans 1-22 (MVLGSAALFVLSLCVTELTLHA). The region spanning 45–101 (GCPGLPGALGPKGEAGAKGDRGESGLPGHPGKAGPTGPKGDRGEKGVRGEKGDTGPS) is the Collagen-like domain. The interval 53–106 (LGPKGEAGAKGDRGESGLPGHPGKAGPTGPKGDRGEKGVRGEKGDTGPSQSCAT) is disordered. The span at 83 to 97 (KGDRGEKGVRGEKGD) shows a compositional bias: basic and acidic residues. The 218-residue stretch at 102-319 (QSCATGPRTC…KVSEMKVRLI (218 aa)) folds into the Fibrinogen C-terminal domain. Intrachain disulfides connect Cys-104–Cys-132 and Cys-111–Cys-139. Residues Asp-255, Asp-257, and Ser-261 each coordinate Ca(2+). A disulfide bridge connects residues Cys-263 and Cys-276. Asn-306 carries N-linked (GlcNAc...) asparagine glycosylation.

It belongs to the ficolin lectin family. In terms of assembly, homotrimer. Interacts with elastin. Interacts with MASP1 and MASP2.

It localises to the secreted. In terms of biological role, may function in innate immunity through activation of the lectin complement pathway. Calcium-dependent and GlcNAc-binding lectin. The chain is Ficolin-2 (Fcn2) from Rattus norvegicus (Rat).